The chain runs to 504 residues: GTPase Obg (504 aa).

The region spanning 2–159 (SQFVDRVVLH…KDVTLELKSM (158 aa)) is the Obg domain. Residues 68–88 (AERGNNGAGDDRHGARGKDLT) form a disordered region. The 181-residue stretch at 160 to 340 (ADVGLVGFPS…LRFALMDIVR (181 aa)) folds into the OBG-type G domain. GTP-binding positions include 166–173 (GFPSAGKS), 191–195 (FTTLA), 212–215 (DVPG), 292–295 (NKMD), and 321–323 (STV). Mg(2+) is bound by residues Ser-173 and Thr-193. The 81-residue stretch at 364–444 (KRKGRFADFE…IGGITFEWDP (81 aa)) folds into the OCT domain. The disordered stretch occupies residues 449–481 (GVDQTPAYGRGKDRRLEQTDRVTAEQRKRASQA). Positions 458–476 (RGKDRRLEQTDRVTAEQRK) are enriched in basic and acidic residues.

This sequence belongs to the TRAFAC class OBG-HflX-like GTPase superfamily. OBG GTPase family. Monomer. Mg(2+) is required as a cofactor.

It is found in the cytoplasm. Functionally, an essential GTPase which binds GTP, GDP and possibly (p)ppGpp with moderate affinity, with high nucleotide exchange rates and a fairly low GTP hydrolysis rate. Plays a role in control of the cell cycle, stress response, ribosome biogenesis and in those bacteria that undergo differentiation, in morphogenesis control. The sequence is that of GTPase Obg from Corynebacterium urealyticum (strain ATCC 43042 / DSM 7109).